We begin with the raw amino-acid sequence, 477 residues long: 3-isopropylmalate dehydratase large subunit (477 aa).

[4Fe-4S] cluster contacts are provided by cysteine 352, cysteine 413, and cysteine 416.

Belongs to the aconitase/IPM isomerase family. LeuC type 1 subfamily. In terms of assembly, heterodimer of LeuC and LeuD. [4Fe-4S] cluster is required as a cofactor.

The catalysed reaction is (2R,3S)-3-isopropylmalate = (2S)-2-isopropylmalate. It functions in the pathway amino-acid biosynthesis; L-leucine biosynthesis; L-leucine from 3-methyl-2-oxobutanoate: step 2/4. Its function is as follows. Catalyzes the isomerization between 2-isopropylmalate and 3-isopropylmalate, via the formation of 2-isopropylmaleate. The chain is 3-isopropylmalate dehydratase large subunit from Pseudomonas putida (strain GB-1).